The following is a 327-amino-acid chain: Carboxylesterase 20 (327 aa).

An Involved in the stabilization of the negatively charged intermediate by the formation of the oxyanion hole motif is present at residues 87-89 (HGG). The active-site Nucleophile is the serine 166. Catalysis depends on residues aspartate 272 and histidine 302.

The protein belongs to the 'GDXG' lipolytic enzyme family. Expressed in roots, stems, flowers and siliques.

It catalyses the reaction a carboxylic ester + H2O = an alcohol + a carboxylate + H(+). With respect to regulation, esterase activity measured in vitro with the synthetic substrate p-nitrophenyl acetate (pNPA) is inhibited by strigolactone. Functionally, carboxylesterase that possesses esterase activity in vitro with the synthetic substrate p-nitrophenyl acetate (pNPA). Binds strigolactones, but is not able to hydrolyze them. May be involved in the regulation of shoot branching. The protein is Carboxylesterase 20 of Arabidopsis thaliana (Mouse-ear cress).